Reading from the N-terminus, the 536-residue chain is Phosphoenolpyruvate carboxykinase (ATP) (536 aa).

Substrate is bound by residues Arg61, Tyr195, and Lys201. Residues Lys201, His220, and 236-244 (GLSGTGKTT) contribute to the ATP site. Mn(2+) contacts are provided by Lys201 and His220. Residue Asp257 participates in Mn(2+) binding. Residues Glu285, Arg322, and Thr447 each contribute to the ATP site. Arg322 is a binding site for substrate.

This sequence belongs to the phosphoenolpyruvate carboxykinase (ATP) family. Mn(2+) is required as a cofactor.

The protein localises to the cytoplasm. The enzyme catalyses oxaloacetate + ATP = phosphoenolpyruvate + ADP + CO2. Its pathway is carbohydrate biosynthesis; gluconeogenesis. Involved in the gluconeogenesis. Catalyzes the conversion of oxaloacetate (OAA) to phosphoenolpyruvate (PEP) through direct phosphoryl transfer between the nucleoside triphosphate and OAA. This chain is Phosphoenolpyruvate carboxykinase (ATP), found in Agrobacterium fabrum (strain C58 / ATCC 33970) (Agrobacterium tumefaciens (strain C58)).